A 357-amino-acid polypeptide reads, in one-letter code: Ferrochelatase (357 aa).

The Fe cation site is built by H193 and E272.

The protein belongs to the ferrochelatase family.

It localises to the cytoplasm. The catalysed reaction is heme b + 2 H(+) = protoporphyrin IX + Fe(2+). It functions in the pathway porphyrin-containing compound metabolism; protoheme biosynthesis; protoheme from protoporphyrin-IX: step 1/1. Functionally, catalyzes the ferrous insertion into protoporphyrin IX. The chain is Ferrochelatase from Hyphomonas neptunium (strain ATCC 15444).